Consider the following 604-residue polypeptide: Matrix metalloproteinase-21 (604 aa).

Positions 1-22 (MPSIKLLVWCCLCVISPRLCHS) are cleaved as a signal peptide. Positions 23 to 180 (EKLFHSRDRS…PDPPKIRRKR (158 aa)) are excised as a propeptide. The disordered stretch occupies residues 132 to 175 (KPRCGVPDNQMAKKETEKPTAAQSLENKTKDSENVTQQNPDPPK). The Cysteine switch motif lies at 133-140 (PRCGVPDN). C135 contacts Zn(2+). N-linked (GlcNAc...) asparagine glycans are attached at residues N158 and N165. A Zn(2+)-binding site is contributed by H318. E319 is a catalytic residue. 2 residues coordinate Zn(2+): H322 and H328. A disulfide bridge links C364 with C595. Hemopexin repeat units follow at residues 365–424 (EGPF…WHGI), 426–482 (VQNI…FPGI), 483–531 (PSPI…FPAV), and 538–594 (KGNI…WFDI). N-linked (GlcNAc...) asparagine glycans are attached at residues N404 and N407.

It belongs to the peptidase M10A family. It depends on Zn(2+) as a cofactor. Requires Ca(2+) as cofactor. The precursor is cleaved by a furin endopeptidase.

Its subcellular location is the secreted. In terms of biological role, plays a specialized role in the generation of left-right asymmetry during embryogenesis. May act as a negative regulator of the NOTCH-signaling pathway. This Xenopus laevis (African clawed frog) protein is Matrix metalloproteinase-21 (mmp21).